A 240-amino-acid chain; its full sequence is T4 protein (240 aa).

The protein belongs to the poxviruses B9 family.

This is T4 protein from Sheeppox virus (strain KS-1) (SPPV).